A 623-amino-acid polypeptide reads, in one-letter code: tRNA 5-methylaminomethyl-2-thiouridine biosynthesis bifunctional protein MnmC (623 aa).

The segment at M1–P244 is tRNA (mnm(5)s(2)U34)-methyltransferase. Residues I268 to S623 form an FAD-dependent cmnm(5)s(2)U34 oxidoreductase region.

In the N-terminal section; belongs to the methyltransferase superfamily. tRNA (mnm(5)s(2)U34)-methyltransferase family. It in the C-terminal section; belongs to the DAO family. FAD serves as cofactor.

It is found in the cytoplasm. The catalysed reaction is 5-aminomethyl-2-thiouridine(34) in tRNA + S-adenosyl-L-methionine = 5-methylaminomethyl-2-thiouridine(34) in tRNA + S-adenosyl-L-homocysteine + H(+). Its function is as follows. Catalyzes the last two steps in the biosynthesis of 5-methylaminomethyl-2-thiouridine (mnm(5)s(2)U) at the wobble position (U34) in tRNA. Catalyzes the FAD-dependent demodification of cmnm(5)s(2)U34 to nm(5)s(2)U34, followed by the transfer of a methyl group from S-adenosyl-L-methionine to nm(5)s(2)U34, to form mnm(5)s(2)U34. In Acinetobacter baylyi (strain ATCC 33305 / BD413 / ADP1), this protein is tRNA 5-methylaminomethyl-2-thiouridine biosynthesis bifunctional protein MnmC.